The chain runs to 336 residues: Phospho-N-acetylmuramoyl-pentapeptide-transferase (336 aa).

10 consecutive transmembrane segments (helical) span residues 3 to 23, 53 to 73, 78 to 98, 118 to 138, 143 to 163, 174 to 194, 200 to 220, 226 to 246, 251 to 271, and 316 to 336; these read LTLI…PYFI, GGTV…LFSI, SLAL…IGFL, LALQ…PSGI, VFGY…FWVV, GIDG…GVIA, FDVL…FCFN, VFMG…ISIA, WTLL…MLQV, and AFLW…LYVF.

This sequence belongs to the glycosyltransferase 4 family. MraY subfamily. Mg(2+) is required as a cofactor.

It is found in the cell membrane. The catalysed reaction is UDP-N-acetyl-alpha-D-muramoyl-L-alanyl-gamma-D-glutamyl-L-lysyl-D-alanyl-D-alanine + di-trans,octa-cis-undecaprenyl phosphate = Mur2Ac(oyl-L-Ala-gamma-D-Glu-L-Lys-D-Ala-D-Ala)-di-trans,octa-cis-undecaprenyl diphosphate + UMP. It participates in cell wall biogenesis; peptidoglycan biosynthesis. In terms of biological role, catalyzes the initial step of the lipid cycle reactions in the biosynthesis of the cell wall peptidoglycan: transfers peptidoglycan precursor phospho-MurNAc-pentapeptide from UDP-MurNAc-pentapeptide onto the lipid carrier undecaprenyl phosphate, yielding undecaprenyl-pyrophosphoryl-MurNAc-pentapeptide, known as lipid I. The sequence is that of Phospho-N-acetylmuramoyl-pentapeptide-transferase from Streptococcus pyogenes serotype M1.